Here is a 57-residue protein sequence, read N- to C-terminus: uncharacterized protein (57 aa).

2 helical membrane passes run V4–W26 and A33–L55.

The protein resides in the cell membrane. This is an uncharacterized protein from Methanocaldococcus jannaschii (strain ATCC 43067 / DSM 2661 / JAL-1 / JCM 10045 / NBRC 100440) (Methanococcus jannaschii).